We begin with the raw amino-acid sequence, 305 residues long: Homeobox protein ceh-23 (305 aa).

2 disordered regions span residues 113–140 (ASCPEPPASSQATVTLQVPSTGSPERRR) and 262–305 (RRSK…KVLN). Residues 120–135 (ASSQATVTLQVPSTGS) show a composition bias toward polar residues. Positions 211–270 (HRKARTIYGTTQTQQLEDMFKGQMYVVGAERENLAQRLGLSPSQVRIWFQNRRSKHRRKQ) form a DNA-binding region, homeobox. Acidic residues predominate over residues 287–305 (GKDEEEDDEEDEDDVKVLN).

Belongs to the distal-less homeobox family.

It is found in the nucleus. Its function is as follows. Probable transcription factor. Required for differentiation of AIY interneurons, acting downstream of LIM/homeobox protein ttx-3. Modulates gene expression, acting downstream of AMP kinase aak-2/AMPK signaling. Modulates lifespan. The protein is Homeobox protein ceh-23 (ceh-23) of Caenorhabditis elegans.